Reading from the N-terminus, the 315-residue chain is D-erythronate dehydrogenase (315 aa).

NAD(+) is bound by residues Ser119, Tyr143, and Lys147. The active-site Proton acceptor is Tyr143.

It belongs to the NAD(P)-dependent epimerase/dehydratase family.

It catalyses the reaction D-erythronate + NAD(+) = 2-dehydro-D-erythronate + NADH + H(+). Catalyzes oxidation of D-erythronate to 2-oxo-tetronate. Can use either NAD(+) or NADP(+) as cosubstrate, with a preference for NAD(+). This is D-erythronate dehydrogenase from Haemophilus influenzae (strain ATCC 51907 / DSM 11121 / KW20 / Rd).